A 360-amino-acid polypeptide reads, in one-letter code: Probable cinnamyl alcohol dehydrogenase 6 (360 aa).

Position 48 (Cys48) interacts with Zn(2+). Residue Thr50 coordinates NADP(+). Residues His70, Glu71, Cys101, Cys104, Cys107, Cys115, and Cys164 each contribute to the Zn(2+) site. NADP(+)-binding positions include Thr168, 192–197, 215–220, Thr255, Gly279, and 302–304; these read GLGGLG, STSPAK, and SMT.

This sequence belongs to the zinc-containing alcohol dehydrogenase family. In terms of assembly, homodimer. Requires Zn(2+) as cofactor.

It catalyses the reaction (E)-cinnamyl alcohol + NADP(+) = (E)-cinnamaldehyde + NADPH + H(+). The catalysed reaction is (E)-coniferol + NADP(+) = (E)-coniferaldehyde + NADPH + H(+). The enzyme catalyses (E)-sinapyl alcohol + NADP(+) = (E)-sinapaldehyde + NADPH + H(+). It carries out the reaction (E)-4-coumaroyl alcohol + NADP(+) = (E)-4-coumaraldehyde + NADPH + H(+). It catalyses the reaction (E)-caffeyl alcohol + NADP(+) = (E)-caffeyl aldehyde + NADPH + H(+). Its pathway is aromatic compound metabolism; phenylpropanoid biosynthesis. Functionally, involved in lignin biosynthesis. Catalyzes the final step specific for the production of lignin monomers. Catalyzes the NADPH-dependent reduction of coniferaldehyde, 5-hydroxyconiferaldehyde, sinapaldehyde, 4-coumaraldehyde and caffeyl aldehyde to their respective alcohols. This Oryza sativa subsp. japonica (Rice) protein is Probable cinnamyl alcohol dehydrogenase 6.